The chain runs to 63 residues: H/ACA ribonucleoprotein complex subunit 3-like protein (63 aa).

The tract at residues 18–40 is disordered; the sequence is KMDPEGKPTLSAHPARFSPDDKY.

Belongs to the NOP10 family. As to quaternary structure, component of the small nucleolar ribonucleoprotein particles containing H/ACA-type snoRNAs (H/ACA snoRNPs).

It localises to the nucleus. The protein resides in the nucleolus. In terms of biological role, required for ribosome biogenesis. Part of a complex which catalyzes pseudouridylation of rRNA. This involves the isomerization of uridine such that the ribose is subsequently attached to C5, instead of the normal N1. Pseudouridine ('psi') residues may serve to stabilize the conformation of rRNAs. The protein is H/ACA ribonucleoprotein complex subunit 3-like protein of Trypanosoma cruzi.